A 369-amino-acid polypeptide reads, in one-letter code: Methylthioribose-1-phosphate isomerase (369 aa).

Residues 54-56, Arg-95, and Gln-208 each bind substrate; that span reads RGA. Asp-249 acts as the Proton donor in catalysis. 259 to 260 lines the substrate pocket; that stretch reads NK.

This sequence belongs to the eIF-2B alpha/beta/delta subunits family. MtnA subfamily.

The catalysed reaction is 5-(methylsulfanyl)-alpha-D-ribose 1-phosphate = 5-(methylsulfanyl)-D-ribulose 1-phosphate. It participates in amino-acid biosynthesis; L-methionine biosynthesis via salvage pathway; L-methionine from S-methyl-5-thio-alpha-D-ribose 1-phosphate: step 1/6. Its function is as follows. Catalyzes the interconversion of methylthioribose-1-phosphate (MTR-1-P) into methylthioribulose-1-phosphate (MTRu-1-P). The polypeptide is Methylthioribose-1-phosphate isomerase (Desulfatibacillum aliphaticivorans).